A 401-amino-acid polypeptide reads, in one-letter code: Enolase (401 aa).

Q154 provides a ligand contact to (2R)-2-phosphoglycerate. E196 (proton donor) is an active-site residue. 3 residues coordinate Mg(2+): D232, E275, and D302. 4 residues coordinate (2R)-2-phosphoglycerate: K327, R356, S357, and K378. The active-site Proton acceptor is K327.

Belongs to the enolase family. Mg(2+) is required as a cofactor.

Its subcellular location is the cytoplasm. The protein resides in the secreted. It localises to the cell surface. The enzyme catalyses (2R)-2-phosphoglycerate = phosphoenolpyruvate + H2O. It functions in the pathway carbohydrate degradation; glycolysis; pyruvate from D-glyceraldehyde 3-phosphate: step 4/5. Functionally, catalyzes the reversible conversion of 2-phosphoglycerate (2-PG) into phosphoenolpyruvate (PEP). It is essential for the degradation of carbohydrates via glycolysis. The chain is Enolase from Haloquadratum walsbyi (strain DSM 16790 / HBSQ001).